The following is an 89-amino-acid chain: Small ribosomal subunit protein uS17 (89 aa).

This sequence belongs to the universal ribosomal protein uS17 family. Part of the 30S ribosomal subunit.

In terms of biological role, one of the primary rRNA binding proteins, it binds specifically to the 5'-end of 16S ribosomal RNA. The protein is Small ribosomal subunit protein uS17 of Chlorobium phaeobacteroides (strain BS1).